Reading from the N-terminus, the 529-residue chain is Chaperonin GroEL, chloroplastic (529 aa).

Residues 29–32 (TLGP), 86–90 (DGTTT), glycine 414, 480–482 (DAA), and aspartate 496 contribute to the ATP site.

The protein belongs to the chaperonin (HSP60) family. In terms of assembly, forms a cylinder of 14 subunits composed of two heptameric rings stacked back-to-back. Interacts with the co-chaperonin GroES.

It is found in the plastid. It localises to the chloroplast. The enzyme catalyses ATP + H2O + a folded polypeptide = ADP + phosphate + an unfolded polypeptide.. In terms of biological role, together with its co-chaperonin GroES, plays an essential role in assisting protein folding. The GroEL-GroES system forms a nano-cage that allows encapsulation of the non-native substrate proteins and provides a physical environment optimized to promote and accelerate protein folding. This is Chaperonin GroEL, chloroplastic from Guillardia theta (Cryptophyte).